The sequence spans 479 residues: Adenosylhomocysteinase (479 aa).

Substrate is bound by residues Thr-66, Asp-142, and Glu-203. 204 to 206 (TTT) is a binding site for NAD(+). 2 residues coordinate substrate: Lys-233 and Asp-237. NAD(+) contacts are provided by residues Asn-238, 267 to 272 (GYGDVG), Glu-290, Asn-325, 346 to 348 (IGH), and Asn-394.

This sequence belongs to the adenosylhomocysteinase family. It depends on NAD(+) as a cofactor.

The protein localises to the cytoplasm. The catalysed reaction is S-adenosyl-L-homocysteine + H2O = L-homocysteine + adenosine. The protein operates within amino-acid biosynthesis; L-homocysteine biosynthesis; L-homocysteine from S-adenosyl-L-homocysteine: step 1/1. In terms of biological role, may play a key role in the regulation of the intracellular concentration of adenosylhomocysteine. The chain is Adenosylhomocysteinase from Oleidesulfovibrio alaskensis (strain ATCC BAA-1058 / DSM 17464 / G20) (Desulfovibrio alaskensis).